The chain runs to 117 residues: Gamma-aminobutyric acid receptor-associated protein (117 aa).

Positions 1–22 are interaction with beta-tubulin; the sequence is MKFVYKEEHPFEKRRSEGEKIR. The interaction with GABRG2 stretch occupies residues 36-68; it reads APKARIGDLDKKKYLVPSDLTVGQFYFLIRKRI. The interaction with GPHN stretch occupies residues 36-117; the sequence is APKARIGDLD…AYSDESVYGL (82 aa). The tract at residues 48-50 is interaction with LIR (LC3 nteracting Region) motif of ATG3; sequence KYL. G116 carries the Phosphatidylethanolamine amidated glycine; alternate lipid modification. G116 carries Phosphatidylserine amidated glycine; alternate lipidation. L117 is a propeptide (removed in mature form).

Belongs to the ATG8 family. As to quaternary structure, interacts with GPHN and NSF. Interacts with ATG3, ATG7 and ATG13. Interacts with alpha-tubulin. Interacts with beta-tubulin. Interacts with GABRG2. Interacts with RB1CC1. Interacts with ULK1. Interacts with CALR. Interacts with DDX47. Interacts with TP53INP1 and TP53INP2. Interacts with TBC1D5. Interacts with TBC1D25. Directly interacts with SQSTM1. Interacts with MAPK15. Interacts with TECPR2. Interacts with PCM1. Interacts with TRIM5 and TRIM21. Interacts with MEFV. Interacts with KIF21B. Interacts with WDFY3; this interaction is required for WDFY3 recruitment to MAP1LC3B-positive p62/SQSTM1 bodies. Interacts with FLCN; interaction regulates autophagy. Interacts with UBA5. Interacts with KBTBD6 and KBTBD7; the interaction is direct and required for the ubiquitination of TIAM1. Interacts with reticulophagy regulators RETREG1, RETREG2 and RETREG3. Interacts with IRGM. Interacts with STX17. Interacts with CT55; this interaction may be important for GABARAP protein stability. Interacts with DNM2. Interacts with NCOA4 (via C-terminus). In terms of processing, the precursor molecule is cleaved by ATG4 (ATG4A, ATG4B, ATG4C or ATG4D) to expose the glycine at the C-terminus and form the cytosolic form, GABARAP-I. The processed form is then activated by APG7L/ATG7, transferred to ATG3 and conjugated to phosphatidylethanolamine (PE) phospholipid to form the membrane-bound form, GABARAP-II. During non-canonical autophagy, the processed form is conjugated to phosphatidylserine (PS) phospholipid. ATG4 proteins also mediate the delipidation of PE-conjugated forms. In addition, ATG4B and ATG4D mediate delipidation of ATG8 proteins conjugated to PS during non-canonical autophagy. ATG4B constitutes the major protein for proteolytic activation. ATG4D is the main enzyme for delipidation activity. In terms of tissue distribution, expressed in brain (at protein level). Can be found in both somatodendritic and axonal compartment of neurons.

Its subcellular location is the cytoplasmic vesicle. The protein resides in the autophagosome membrane. It is found in the endomembrane system. The protein localises to the cytoplasm. It localises to the cytoskeleton. Its subcellular location is the golgi apparatus membrane. Ubiquitin-like modifier that plays a role in intracellular transport of GABA(A) receptors and its interaction with the cytoskeleton. Involved in autophagy: while LC3s are involved in elongation of the phagophore membrane, the GABARAP/GATE-16 subfamily is essential for a later stage in autophagosome maturation. Through its interaction with the reticulophagy receptor TEX264, participates in the remodeling of subdomains of the endoplasmic reticulum into autophagosomes upon nutrient stress, which then fuse with lysosomes for endoplasmic reticulum turnover. Also required for the local activation of the CUL3(KBTBD6/7) E3 ubiquitin ligase complex, regulating ubiquitination a nd degradation of TIAM1, a guanyl-nucleotide exchange factor (GEF) that activates RAC1 and downstream signal transduction. Thereby, regulates different biological processes including the organization of the cytoskeleton, cell migration and proliferation. Involved in apoptosis. The sequence is that of Gamma-aminobutyric acid receptor-associated protein from Rattus norvegicus (Rat).